Consider the following 210-residue polypeptide: Ribosomal RNA small subunit methyltransferase G (210 aa).

Residues L78, I124 to E125, and R138 each bind S-adenosyl-L-methionine.

Belongs to the methyltransferase superfamily. RNA methyltransferase RsmG family.

It localises to the cytoplasm. The enzyme catalyses guanosine(527) in 16S rRNA + S-adenosyl-L-methionine = N(7)-methylguanosine(527) in 16S rRNA + S-adenosyl-L-homocysteine. Functionally, specifically methylates the N7 position of guanine in position 527 of 16S rRNA. This Bordetella bronchiseptica (strain ATCC BAA-588 / NCTC 13252 / RB50) (Alcaligenes bronchisepticus) protein is Ribosomal RNA small subunit methyltransferase G.